The chain runs to 537 residues: MGKNTKRNKKTKQQQQQPQQNGVTASASGTAVEDFEDQQAASSLPSLNGKKRSQLNKLVEELLDLVEKQPANPNEEWKQYGQLQELLKQIMILEEPLSQAVCPQISDSPDDQTRLAKVEAFSAWAKDGGVHSEGLEIAIFPGYQLGLRATRPLAKDELVLSVPRKLILSEENNSDCRLFGKMTQATHLNLAYDLVIEKIRGEFSEWRPYIDVLPAKYNTVLYFTTKQMELLRGTAAAALAMRQCRVIAKQYAFLYKYAHTMTEPSTGNRSHPGERGLFFTQHGLCYKLYRWAVSTVMTRQNLVPSEKQESEDGPKLISALIPYWDMANHRPGKITSFYATVSRQLECTAQEAVNTGEQFFIYYGDRSNTDLLVHNGFVDPNNTKDYVNIRVGLSLTDALAAKRASILDKLNIRHTAELRVLPAPDFISKELLAFVRVFKMSAEQLDHWCSDLDRAGDLLHIDCALETDHETRTWQFLEDRLKLLLAVFNKEMHEADEVKELELKDGQEIELMLFLYRRLERSILAGALQYAQEHRKV.

Over residues 1 to 12 (MGKNTKRNKKTK) the composition is skewed to basic residues. Positions 1–50 (MGKNTKRNKKTKQQQQQPQQNGVTASASGTAVEDFEDQQAASSLPSLNGK) are disordered. S-adenosyl-L-methionine is bound by residues R114, 143-145 (YQL), R299, 325-329 (DMANH), and 375-377 (NGF). The region spanning 133–364 (EGLEIAIFPG…TGEQFFIYYG (232 aa)) is the SET domain.

It belongs to the class V-like SAM-binding methyltransferase superfamily. SETD3 actin-histidine methyltransferase family.

The protein resides in the cytoplasm. The protein localises to the nucleus. The catalysed reaction is L-histidyl-[protein] + S-adenosyl-L-methionine = N(tele)-methyl-L-histidyl-[protein] + S-adenosyl-L-homocysteine + H(+). In terms of biological role, protein-histidine N-methyltransferase that specifically mediates 3-methylhistidine (tele-methylhistidine) methylation of actin at 'His-74'. This Drosophila melanogaster (Fruit fly) protein is Actin-histidine N-methyltransferase.